Consider the following 110-residue polypeptide: Neural hemoglobin (110 aa).

In terms of domain architecture, Globin spans 2 to 110 (VNWAAVVDDF…HAIDDILSHL (109 aa)). His-70 contributes to the heme binding site.

The protein belongs to the globin family. Homotetramer. Self-associates in the deoxy state. Seems to dissociate upon oxygenation.

In terms of biological role, acts as an oxygen store capable of sustaining neuronal activity in an anoxic environment for 5 to 30 minutes. The polypeptide is Neural hemoglobin (Cerebratulus lacteus (Milky ribbon worm)).